The chain runs to 744 residues: Eukaryotic translation initiation factor 3 subunit B (744 aa).

The disordered stretch occupies residues 1 to 21 (MAPSFDHLPDPEEDEYDEEEL). Positions 11 to 21 (PEEDEYDEEEL) are enriched in acidic residues. The RRM domain occupies 40-126 (TFVVIDGLPE…HTLRVNKLTD (87 aa)). WD repeat units follow at residues 193 to 232 (DRQH…RQKR), 234 to 290 (AHPF…PLRS), 307 to 348 (PIKR…LLDK), and 577 to 622 (ADHY…LREE).

The protein belongs to the eIF-3 subunit B family. As to quaternary structure, component of the eukaryotic translation initiation factor 3 (eIF-3) complex.

It localises to the cytoplasm. Functionally, RNA-binding component of the eukaryotic translation initiation factor 3 (eIF-3) complex, which is involved in protein synthesis of a specialized repertoire of mRNAs and, together with other initiation factors, stimulates binding of mRNA and methionyl-tRNAi to the 40S ribosome. The eIF-3 complex specifically targets and initiates translation of a subset of mRNAs involved in cell proliferation. In Botryotinia fuckeliana (strain B05.10) (Noble rot fungus), this protein is Eukaryotic translation initiation factor 3 subunit B (prt1).